A 106-amino-acid polypeptide reads, in one-letter code: Iron-sulfur cluster assembly protein CyaY (106 aa).

The protein belongs to the frataxin family.

In terms of biological role, involved in iron-sulfur (Fe-S) cluster assembly. May act as a regulator of Fe-S biogenesis. The protein is Iron-sulfur cluster assembly protein CyaY of Serratia proteamaculans (strain 568).